Here is a 308-residue protein sequence, read N- to C-terminus: Mitoferrin (308 aa).

Helical transmembrane passes span 13–29 (GGSFYVHLIAGAAAGFA), 69–89 (ITGLFRGLTAVAAGAAPSHAV), 111–131 (IKVGIAGAIATMTSEAVASPM), 168–184 (YTTTLVMNVPYNIVYFA), 213–233 (LVAGGGAGMLAAAFTNPFDVV), and 285–302 (MVFHSMSSAIVWSVYEYF). 3 Solcar repeats span residues 14–100 (GSFY…LKFK), 108–192 (HHPI…LKKI), and 207–305 (YQLI…FKFI).

The protein belongs to the mitochondrial carrier (TC 2.A.29) family.

The protein resides in the mitochondrion inner membrane. Functionally, mitochondrial solute carriers shuttle metabolites, nucleotides, and cofactors through the mitochondrial inner membrane. Mitochondrial iron transporter that mediates iron uptake. Probably required for heme synthesis of hemoproteins and Fe-S cluster assembly. In Dictyostelium discoideum (Social amoeba), this protein is Mitoferrin (mcfF).